The chain runs to 332 residues: Glycerol-3-phosphate dehydrogenase [NAD(P)+] (332 aa).

Tryptophan 11, arginine 30, and lysine 108 together coordinate NADPH. Sn-glycerol 3-phosphate is bound by residues lysine 108, glycine 137, and serine 139. Alanine 141 provides a ligand contact to NADPH. Sn-glycerol 3-phosphate is bound by residues lysine 192, aspartate 245, serine 255, arginine 256, and asparagine 257. Lysine 192 serves as the catalytic Proton acceptor. Arginine 256 contributes to the NADPH binding site. NADPH-binding residues include valine 280 and glutamate 282.

The protein belongs to the NAD-dependent glycerol-3-phosphate dehydrogenase family.

It is found in the cytoplasm. It catalyses the reaction sn-glycerol 3-phosphate + NAD(+) = dihydroxyacetone phosphate + NADH + H(+). The catalysed reaction is sn-glycerol 3-phosphate + NADP(+) = dihydroxyacetone phosphate + NADPH + H(+). It participates in membrane lipid metabolism; glycerophospholipid metabolism. In terms of biological role, catalyzes the reduction of the glycolytic intermediate dihydroxyacetone phosphate (DHAP) to sn-glycerol 3-phosphate (G3P), the key precursor for phospholipid synthesis. The protein is Glycerol-3-phosphate dehydrogenase [NAD(P)+] of Burkholderia pseudomallei (strain 1710b).